A 73-amino-acid chain; its full sequence is Kappa-scoloptoxin(03)-Ssm1b (73 aa).

A signal peptide spans 1–23; sequence MKPSMAILLVIALIIFSLDKSYS. 3 cysteine pairs are disulfide-bonded: Cys32–Cys58, Cys41–Cys57, and Cys44–Cys67.

Post-translationally, contains 3 disulfide bonds. Expressed by the venom gland.

It localises to the secreted. Its function is as follows. Inhibits voltage-gated potassium channels. The sequence is that of Kappa-scoloptoxin(03)-Ssm1b from Scolopendra mutilans (Chinese red-headed centipede).